A 386-amino-acid polypeptide reads, in one-letter code: Ferredoxin--NADP reductase (386 aa).

One can recognise a CpcD-like domain in the interval serine 9–leucine 67. Positions asparagine 104–leucine 228 constitute an FAD-binding FR-type domain. Residues arginine 163 to serine 166, cysteine 184 to arginine 186, tyrosine 190, valine 202 to serine 204, and threonine 243 each bind FAD. Residues serine 166 and arginine 186 each coordinate NADP(+). NADP(+) is bound by residues threonine 243, valine 275–alanine 276, serine 305–arginine 306, lysine 315–glutamine 319, glycine 344–leucine 345, and glutamate 384.

It belongs to the ferredoxin--NADP reductase type 1 family. FAD serves as cofactor.

It localises to the cellular thylakoid membrane. It carries out the reaction 2 reduced [2Fe-2S]-[ferredoxin] + NADP(+) + H(+) = 2 oxidized [2Fe-2S]-[ferredoxin] + NADPH. The polypeptide is Ferredoxin--NADP reductase (petH) (Thermosynechococcus vestitus (strain NIES-2133 / IAM M-273 / BP-1)).